The sequence spans 217 residues: Endo-1,4-beta-xylanase (217 aa).

The first 17 residues, methionine 1–serine 17, serve as a signal peptide directing secretion. One can recognise a GH11 domain in the interval valine 20 to serine 217. Asparagine 56 and asparagine 80 each carry an N-linked (GlcNAc...) asparagine glycan. The Nucleophile role is filled by glutamate 107. The Proton donor role is filled by glutamate 204.

It belongs to the glycosyl hydrolase 11 (cellulase G) family. In terms of tissue distribution, expressed in larval carcasses and gut, and adult gut.

The protein localises to the secreted. The enzyme catalyses Endohydrolysis of (1-&gt;4)-beta-D-xylosidic linkages in xylans.. It participates in glycan degradation; xylan degradation. The chain is Endo-1,4-beta-xylanase from Phaedon cochleariae (Mustard beetle).